The primary structure comprises 543 residues: Keratin, type II cytoskeletal 75 (543 aa).

Polar residues predominate over residues 1 to 16; it reads MSRQSTITFQTSSRRG. Positions 1 to 48 are disordered; it reads MSRQSTITFQTSSRRGFSTASATTPATSRSRFSSASVTHSPAGSGGLG. Residues 1–144 are head; it reads MSRQSTITFQ…DPNIQRVRKE (144 aa). Positions 17-36 are enriched in low complexity; that stretch reads FSTASATTPATSRSRFSSAS. The tract at residues 145-180 is coil 1A; it reads EREQIKTLNNKFASFIDKVRFLEQQNKVLETKWSLL. One can recognise an IF rod domain in the interval 145–458; the sequence is EREQIKTLNN…KLLEGEECRL (314 aa). Residues 181–199 form a linker 1 region; sequence QEQGTRTVRQSLEPFFEAY. Residues 200-292 form a coil 1B region; that stretch reads ITDLRRQLDS…LFEAELCQMQ (93 aa). Residues 293–315 form a linker 12 region; it reads TRVSDTSVVLSMDNNRSLDLDSI. Residues 316 to 454 form a coil 2 region; that stretch reads IAEVKAQYEE…ATYRKLLEGE (139 aa). Residues 455–543 form a tail region; that stretch reads ECRLSGEGVS…TSSSRKSYKH (89 aa). Residues 511–543 are disordered; the sequence is SSFSNSSSRGLGGSGSSFKFVSTTSSSRKSYKH. A compositionally biased stretch (low complexity) spans 526–543; it reads SSFKFVSTTSSSRKSYKH.

It belongs to the intermediate filament family. Heterodimer of a type I and a type II keratin. May associate with KRT17.

Functionally, plays a central role in hair and nail formation. Essential component of keratin intermediate filaments in the companion layer of the hair follicle. The chain is Keratin, type II cytoskeletal 75 (KRT75) from Bos taurus (Bovine).